Reading from the N-terminus, the 197-residue chain is Dephospho-CoA kinase (197 aa).

One can recognise a DPCK domain in the interval 2–197 (RIGLTGGIAS…YDALAKTAHE (196 aa)). An ATP-binding site is contributed by 10-15 (ASGKSL).

This sequence belongs to the CoaE family.

It is found in the cytoplasm. It carries out the reaction 3'-dephospho-CoA + ATP = ADP + CoA + H(+). The protein operates within cofactor biosynthesis; coenzyme A biosynthesis; CoA from (R)-pantothenate: step 5/5. Functionally, catalyzes the phosphorylation of the 3'-hydroxyl group of dephosphocoenzyme A to form coenzyme A. This is Dephospho-CoA kinase from Shouchella clausii (strain KSM-K16) (Alkalihalobacillus clausii).